The chain runs to 103 residues: Co-chaperonin GroES (103 aa).

The protein belongs to the GroES chaperonin family. In terms of assembly, heptamer of 7 subunits arranged in a ring. Interacts with the chaperonin GroEL.

It localises to the cytoplasm. Together with the chaperonin GroEL, plays an essential role in assisting protein folding. The GroEL-GroES system forms a nano-cage that allows encapsulation of the non-native substrate proteins and provides a physical environment optimized to promote and accelerate protein folding. GroES binds to the apical surface of the GroEL ring, thereby capping the opening of the GroEL channel. The protein is Co-chaperonin GroES of Dinoroseobacter shibae (strain DSM 16493 / NCIMB 14021 / DFL 12).